The sequence spans 854 residues: Glucans biosynthesis glucosyltransferase H (854 aa).

Transmembrane regions (helical) follow at residues I155–L175, I209–M229, V528–L548, I583–L603, F619–F639, F671–L691, and F695–Y715.

The protein belongs to the glycosyltransferase 2 family. OpgH subfamily.

Its subcellular location is the cell inner membrane. It participates in glycan metabolism; osmoregulated periplasmic glucan (OPG) biosynthesis. Its function is as follows. Involved in the biosynthesis of osmoregulated periplasmic glucans (OPGs). The polypeptide is Glucans biosynthesis glucosyltransferase H (Pectobacterium carotovorum subsp. carotovorum (strain PC1)).